A 1017-amino-acid chain; its full sequence is MADNVLRKLIVEICSARNLMPKDGQGTASAYAIVDFDGQRRRTKTKFRDLNPQWDEKLEFFVHDVATMGEEILEINLCNDKKTGKRSTFLGKVKIAGSAFASAGSETLVYYPLEKRSVFSQIKGEIGLKAYYVDENPPAAPAATEPKPEAAAATEEKPPEIAKAEDGKKETEAAKTEEKKEGDKKEEEKPKEEAKPDEKKPDAPPDTKAKKPDTAVAPPPPPAEVKNPPIPQKAETVKQNELGIKPENVNRQDLIGSDLELPSLTRDQNRGGGYDLVDRMPFLYIRVAKAKRAKNDGSNPVYAKLVIGTNGVKTRSQTGKDWDQVFAFEKESLNSTSLEVSVWSEEKIEKEDKTTTTTESCLGTVSFDLQEVPKRVPPDSPLAPQWYTLESEKSPGNDVMLAVWLGTQADEAFQEAWQSDSGGLIPETRSKVYLSPKLWYLRLTVIQTQDLQLGLGSEAKSKIPTTELYVKAQLGPQVFKTARTSIGPSASSSGSGNPTWNEDLVFVASEPFEPFLIVTVEDITNGQSIGQTKIHMGSVERRNDDRTEPKSRWFNLAGDEKKPYSGRIHVKVCLEGGYHVLDEAAHVTSDVRPSAKQLAKPPIGLLEVGIRGATNLLPVKTRDGTRGTTDAYVVAKYGPKWIRTRTILDRFNPRWNEQYTWDVYDPCTVLTIGVFDNGRYKRDESGKQGRDVRVGKIRVRLSTLDMNRIYLNSYTLTVILPSGAKKMGEVEIAVRFSCPSWLSIIQAYVTPMLPRMHYVRPLGPAQQDILRHTAMRIVTARLARSEPPLGQEVVQYMLDTDNHVWSMRRSKANWFRVITFLSRAATIARWIHGIRTWVHPPTTVLVHLLLVAIVLCPHLVLPTVFMYAFLILALRFRYRGRVKVNSVDPRLSCVDSVAPDELDEEFDGFPTTRQPEVVRIRYDRLRALAGRAQTLLGDVAAQGERVEALFNWRDPRATCIFVVFCLFASFLFYIVPFKVFLLGSGFYYIRHPRFRDDMPSVPVNFFRRLPSMSDQIL.

The region spanning 1-110 is the C2 1 domain; that stretch reads MADNVLRKLI…ASAGSETLVY (110 aa). The tract at residues 139–231 is disordered; that stretch reads AAPAATEPKP…PAEVKNPPIP (93 aa). The segment covering 141 to 153 has biased composition (low complexity); that stretch reads PAATEPKPEAAAA. Positions 154 to 213 are enriched in basic and acidic residues; that stretch reads TEEKPPEIAKAEDGKKETEAAKTEEKKEGDKKEEEKPKEEAKPDEKKPDAPPDTKAKKPD. Positions 217–231 are enriched in pro residues; the sequence is APPPPPAEVKNPPIP. 3 consecutive C2 domains span residues 258–387, 420–554, and 587–714; these read DLEL…PQWY, DSGG…SRWF, and VTSD…LNSY. Ca(2+) is bound by residues D296, N299, D352, T355, and E359. The next 2 membrane-spanning stretches (helical) occupy residues 851–871 and 957–977; these read VAIV…AFLI and ATCI…IVPF.

Belongs to the MCTP family. The cofactor is Ca(2+). As to expression, expressed in incipient leaf primordia and in roots meristems. Observed in flowers.

The protein localises to the membrane. It is found in the vesicle. Its subcellular location is the golgi apparatus membrane. Functionally, may function as a signaling molecule by regulating the trafficking of other regulators. This chain is Multiple C2 domain and transmembrane region protein 14, found in Arabidopsis thaliana (Mouse-ear cress).